A 687-amino-acid polypeptide reads, in one-letter code: DNA ligase (687 aa).

NAD(+) is bound by residues aspartate 34–aspartate 38, serine 83–leucine 84, and glutamate 117. Catalysis depends on lysine 119, which acts as the N6-AMP-lysine intermediate. NAD(+) is bound by residues arginine 140, glutamate 182, lysine 298, and lysine 322. Positions 416, 419, 434, and 439 each coordinate Zn(2+). In terms of domain architecture, BRCT spans glutamate 609 to glutamate 687.

This sequence belongs to the NAD-dependent DNA ligase family. LigA subfamily. The cofactor is Mg(2+). Requires Mn(2+) as cofactor.

It catalyses the reaction NAD(+) + (deoxyribonucleotide)n-3'-hydroxyl + 5'-phospho-(deoxyribonucleotide)m = (deoxyribonucleotide)n+m + AMP + beta-nicotinamide D-nucleotide.. DNA ligase that catalyzes the formation of phosphodiester linkages between 5'-phosphoryl and 3'-hydroxyl groups in double-stranded DNA using NAD as a coenzyme and as the energy source for the reaction. It is essential for DNA replication and repair of damaged DNA. This is DNA ligase from Anaeromyxobacter sp. (strain K).